The sequence spans 331 residues: dTDP-glucose 4,6-dehydratase (331 aa).

Residues 11 to 12 (FI), 33 to 36 (DALT), 57 to 58 (DI), 77 to 81 (FAAET), and S96 each bind NAD(+). Residue T81 participates in substrate binding. T120 is a binding site for substrate. D121 serves as the catalytic Proton donor. Residues E122 and Y147 each act as proton acceptor in the active site. NAD(+) is bound at residue 147 to 151 (YSSTK). N176 provides a ligand contact to substrate. NAD(+) is bound at residue N177. Residues 186–191 (KFIPRQ), 202–204 (KLY), R211, N246, and 269–273 (DRAGH) each bind substrate.

It belongs to the NAD(P)-dependent epimerase/dehydratase family. dTDP-glucose dehydratase subfamily. In terms of assembly, homodimer. It depends on NAD(+) as a cofactor.

It carries out the reaction dTDP-alpha-D-glucose = dTDP-4-dehydro-6-deoxy-alpha-D-glucose + H2O. It functions in the pathway carbohydrate biosynthesis; dTDP-L-rhamnose biosynthesis. Catalyzes the dehydration of dTDP-D-glucose to form dTDP-6-deoxy-D-xylo-4-hexulose via a three-step process involving oxidation, dehydration and reduction. Involved in the biosynthesis of the dTDP-L-rhamnose which is a component of the critical linker, D-N-acetylglucosamine-L-rhamnose disaccharide, which connects the galactan region of arabinogalactan to peptidoglycan via a phosphodiester linkage. This is dTDP-glucose 4,6-dehydratase (rmlB) from Mycolicibacterium smegmatis (strain ATCC 700084 / mc(2)155) (Mycobacterium smegmatis).